Consider the following 503-residue polypeptide: 2,3-bisphosphoglycerate-independent phosphoglycerate mutase (503 aa).

Positions 10 and 60 each coordinate Mn(2+). The active-site Phosphoserine intermediate is the Ser60. Residues His121, 150-151 (RD), Arg181, Arg187, 256-259 (RPDR), and Lys330 each bind substrate. Mn(2+)-binding residues include Asp396, His400, Asp437, His438, and His455.

The protein belongs to the BPG-independent phosphoglycerate mutase family. In terms of assembly, monomer. Mn(2+) serves as cofactor.

It catalyses the reaction (2R)-2-phosphoglycerate = (2R)-3-phosphoglycerate. Its pathway is carbohydrate degradation; glycolysis; pyruvate from D-glyceraldehyde 3-phosphate: step 3/5. Functionally, catalyzes the interconversion of 2-phosphoglycerate and 3-phosphoglycerate. This is 2,3-bisphosphoglycerate-independent phosphoglycerate mutase from Mycoplasmoides gallisepticum (strain R(low / passage 15 / clone 2)) (Mycoplasma gallisepticum).